A 262-amino-acid polypeptide reads, in one-letter code: MNNLERLRSENPLVICYTNDVVKNFTANGLLSLGASPAMSEAPEEAEDFTRMASALLINIGTLTRENEEDIIKIGKIANQQGTPIVFDPVAVGASTYRKNFCQRFLGEVNVTVIKGNASEILTLIDFNTTMKGTDSDSELDSVNIAKKAANTLNTAIVITGKDDIIAKNEKIIKLSNGSPLLTKITGAGCLLGGVLASFLFRNTQPSIDLLVEAVSVYNIAAEFAEQAPHVNGPGTFLSELLDQLYQMNDITYKNQVKKVEI.

Met-39 lines the substrate pocket. The ATP site is built by Lys-115 and Thr-160. A substrate-binding site is contributed by Gly-187.

This sequence belongs to the Thz kinase family. The cofactor is Mg(2+).

The enzyme catalyses 5-(2-hydroxyethyl)-4-methylthiazole + ATP = 4-methyl-5-(2-phosphooxyethyl)-thiazole + ADP + H(+). The protein operates within cofactor biosynthesis; thiamine diphosphate biosynthesis; 4-methyl-5-(2-phosphoethyl)-thiazole from 5-(2-hydroxyethyl)-4-methylthiazole: step 1/1. Functionally, catalyzes the phosphorylation of the hydroxyl group of 4-methyl-5-beta-hydroxyethylthiazole (THZ). The protein is Hydroxyethylthiazole kinase of Staphylococcus epidermidis (strain ATCC 35984 / DSM 28319 / BCRC 17069 / CCUG 31568 / BM 3577 / RP62A).